Reading from the N-terminus, the 211-residue chain is Uracil phosphoribosyltransferase (211 aa).

Residues arginine 78, arginine 103, and aspartate 130–threonine 138 each bind 5-phospho-alpha-D-ribose 1-diphosphate. Residues isoleucine 196 and glycine 201 to alanine 203 each bind uracil. Aspartate 202 is a 5-phospho-alpha-D-ribose 1-diphosphate binding site.

This sequence belongs to the UPRTase family. It depends on Mg(2+) as a cofactor.

The catalysed reaction is UMP + diphosphate = 5-phospho-alpha-D-ribose 1-diphosphate + uracil. The protein operates within pyrimidine metabolism; UMP biosynthesis via salvage pathway; UMP from uracil: step 1/1. Its activity is regulated as follows. Allosterically activated by GTP. Functionally, catalyzes the conversion of uracil and 5-phospho-alpha-D-ribose 1-diphosphate (PRPP) to UMP and diphosphate. This chain is Uracil phosphoribosyltransferase, found in Beutenbergia cavernae (strain ATCC BAA-8 / DSM 12333 / CCUG 43141 / JCM 11478 / NBRC 16432 / NCIMB 13614 / HKI 0122).